The sequence spans 65 residues: Movement protein TGBp3 (65 aa).

Residues 1–6 (MLPKMQ) are Lumenal-facing. Residues 7-26 (PSAQCLIVFSLAFVLGWYVL) form a helical membrane-spanning segment. The Cytoplasmic portion of the chain corresponds to 27 to 65 (RPGNTSCVLLITGESVRLVNCELTKDLVEAVLLRPLKHL).

The protein belongs to the Tymovirales TGBp3 protein family.

The protein localises to the host endoplasmic reticulum membrane. Plays a role in viral cell-to-cell propagation, by facilitating genome transport to neighboring plant cells through plasmosdesmata. May induce the formation of granular vesicles derived from the Endoplasmic reticulum, which align on actin filaments. The polypeptide is Movement protein TGBp3 (Potato virus S (strain Peruvian)).